The chain runs to 465 residues: Gamma-aminobutyric acid receptor subunit rho-2 (465 aa).

The first 20 residues, methionine 1–serine 20, serve as a signal peptide directing secretion. Over arginine 21–histidine 260 the chain is Extracellular. A 4-aminobutanoate-binding site is contributed by arginine 105. N-linked (GlcNAc...) asparagine glycosylation is present at asparagine 120. Residue serine 169 coordinates 4-aminobutanoate. The cysteines at positions 178 and 192 are disulfide-linked. Glutamate 197 contributes to the 4-aminobutanoate binding site. A glycan (N-linked (GlcNAc...) asparagine) is linked at asparagine 254. Residues isoleucine 261–valine 281 form a helical membrane-spanning segment. Topologically, residues serine 282 to arginine 293 are cytoplasmic. Residues valine 294 to serine 314 form a helical membrane-spanning segment. The Extracellular segment spans residues methionine 315–aspartate 325. The helical transmembrane segment at isoleucine 326–asparagine 346 threads the bilayer. Residues tyrosine 347–lysine 443 are Cytoplasmic-facing. The helical transmembrane segment at tyrosine 444 to phenylalanine 464 threads the bilayer. Residue serine 465 is a topological domain, extracellular.

It belongs to the ligand-gated ion channel (TC 1.A.9) family. Gamma-aminobutyric acid receptor (TC 1.A.9.5) subfamily. GABRR2 sub-subfamily. In terms of assembly, three rho subunits (rho-1/GBRR1, rho-2/GBRR2 and rho-3/GBRR3) coassemble either to form functional homopentamers or heteropentamers. Rho-2 is unable to form a functional homopentamer. Interacts with SQSTM1. As to expression, expressed in spinal cord and in cerebellum. Expressed in retina.

The protein localises to the postsynaptic cell membrane. The protein resides in the cell membrane. The catalysed reaction is chloride(in) = chloride(out). With respect to regulation, in contrast with rho-1 and rho-3 homopentamers, rho-2 GABAARs are not inhibited by picrotoxin. Functionally, rho subunit of the pentameric ligand-gated chloride channels responsible for mediating the effects of gamma-aminobutyric acid (GABA), the major inhibitory neurotransmitter in the brain. Rho-containing GABA-gated chloride channels are a subclass of GABA(A) receptors (GABAARs) entirely composed of rho subunits, where GABA molecules bind at the rho intersubunit interfaces. When activated by GABA, rho-GABAARs selectively allow the flow of chloride anions across the cell membrane down their electrochemical gradient. Rho-2 GABAARs may contribute to the regulation of glial development in the cerebellum by controlling extrasynaptic transmission. Rho-2 GABAARs are also involved in neuronal tonic (extrasynaptic) and phasic (synaptic) transmission in the Purkinje neurons of the cerebellum. Rho-2 GABAARs expressed in retina may play a role in retinal neurotransmission. This Rattus norvegicus (Rat) protein is Gamma-aminobutyric acid receptor subunit rho-2.